Consider the following 532-residue polypeptide: Probable cyclic di-GMP phosphodiesterase PdeD (532 aa).

2 consecutive transmembrane segments (helical) span residues 16 to 36 and 245 to 265; these read MIVC…VRFI and LPLA…ATAY. Positions 266–515 constitute an EAL domain; sequence RMSFSREINL…DFPKWLAGSQ (250 aa).

Its subcellular location is the cell membrane. The catalysed reaction is 3',3'-c-di-GMP + H2O = 5'-phosphoguanylyl(3'-&gt;5')guanosine + H(+). In terms of biological role, phosphodiesterase (PDE) that catalyzes the hydrolysis of cyclic-di-GMP (c-di-GMP) to 5'-pGpG. May serve as a negative regulator of cellulose synthesis (as has been suggested for S.typhimurium); overexpression inhibits cell aggregation in strains able to produce adhesive curli fimbriae. Cyclic-di-GMP is a second messenger which controls cell surface-associated traits in bacteria. This is Probable cyclic di-GMP phosphodiesterase PdeD from Escherichia coli (strain K12).